Here is a 61-residue protein sequence, read N- to C-terminus: Small ribosomal subunit protein uS14B (61 aa).

Residues Cys-24, Cys-27, Cys-40, and Cys-43 each coordinate Zn(2+).

Belongs to the universal ribosomal protein uS14 family. Zinc-binding uS14 subfamily. As to quaternary structure, part of the 30S ribosomal subunit. Contacts proteins S3 and S10. The cofactor is Zn(2+).

Binds 16S rRNA, required for the assembly of 30S particles and may also be responsible for determining the conformation of the 16S rRNA at the A site. The protein is Small ribosomal subunit protein uS14B of Listeria welshimeri serovar 6b (strain ATCC 35897 / DSM 20650 / CCUG 15529 / CIP 8149 / NCTC 11857 / SLCC 5334 / V8).